The following is a 316-amino-acid chain: MNPNFLDFEQPIADLQAKIEELRLVGNDNSLNIGDEIARLQDKSESLTEGIFGNLTSWQIARLARHPQRPYTLDYINHLFTEFEELHGDRHFSDDAAIVGGTARLDGQPVMVIGHQKGREVREKVRRNFGMPRPEGYRKACRLMEMAERFKMPILTFIDTPGAYPGIDAEERNQSEAIAWNLRVMARLKTPIIATVIGEGGSGGALAIGVCDQLNMLQYSTYAVISPEGCASILWRTAEKAPEAAEAMGVTAERLKDLGIVDKVIPEPLGGAHRNPAVMAAAMREQLNSQLHMLKSLDTDALLARRYERLMSYGIA.

The CoA carboxyltransferase C-terminal domain maps to 39 to 293; the sequence is RLQDKSESLT…REQLNSQLHM (255 aa).

Belongs to the AccA family. In terms of assembly, acetyl-CoA carboxylase is a heterohexamer composed of biotin carboxyl carrier protein (AccB), biotin carboxylase (AccC) and two subunits each of ACCase subunit alpha (AccA) and ACCase subunit beta (AccD).

Its subcellular location is the cytoplasm. The catalysed reaction is N(6)-carboxybiotinyl-L-lysyl-[protein] + acetyl-CoA = N(6)-biotinyl-L-lysyl-[protein] + malonyl-CoA. The protein operates within lipid metabolism; malonyl-CoA biosynthesis; malonyl-CoA from acetyl-CoA: step 1/1. Its function is as follows. Component of the acetyl coenzyme A carboxylase (ACC) complex. First, biotin carboxylase catalyzes the carboxylation of biotin on its carrier protein (BCCP) and then the CO(2) group is transferred by the carboxyltransferase to acetyl-CoA to form malonyl-CoA. In Stutzerimonas stutzeri (strain A1501) (Pseudomonas stutzeri), this protein is Acetyl-coenzyme A carboxylase carboxyl transferase subunit alpha.